Consider the following 126-residue polypeptide: Fluoride-specific ion channel FluC 2 (126 aa).

The next 4 helical transmembrane spans lie at 7 to 27 (MWVG…GLSI), 37 to 57 (LGTF…SILF), 65 to 85 (YGDL…TTFS), and 101 to 121 (AIAA…AAFG). Na(+)-binding residues include Gly-79 and Thr-82.

It belongs to the fluoride channel Fluc/FEX (TC 1.A.43) family.

The protein resides in the cell inner membrane. The catalysed reaction is fluoride(in) = fluoride(out). Na(+) is not transported, but it plays an essential structural role and its presence is essential for fluoride channel function. Functionally, fluoride-specific ion channel. Important for reducing fluoride concentration in the cell, thus reducing its toxicity. In Yersinia pseudotuberculosis serotype I (strain IP32953), this protein is Fluoride-specific ion channel FluC 2.